A 155-amino-acid chain; its full sequence is SsrA-binding protein (155 aa).

The protein belongs to the SmpB family.

It is found in the cytoplasm. Required for rescue of stalled ribosomes mediated by trans-translation. Binds to transfer-messenger RNA (tmRNA), required for stable association of tmRNA with ribosomes. tmRNA and SmpB together mimic tRNA shape, replacing the anticodon stem-loop with SmpB. tmRNA is encoded by the ssrA gene; the 2 termini fold to resemble tRNA(Ala) and it encodes a 'tag peptide', a short internal open reading frame. During trans-translation Ala-aminoacylated tmRNA acts like a tRNA, entering the A-site of stalled ribosomes, displacing the stalled mRNA. The ribosome then switches to translate the ORF on the tmRNA; the nascent peptide is terminated with the 'tag peptide' encoded by the tmRNA and targeted for degradation. The ribosome is freed to recommence translation, which seems to be the essential function of trans-translation. This chain is SsrA-binding protein, found in Bordetella bronchiseptica (strain ATCC BAA-588 / NCTC 13252 / RB50) (Alcaligenes bronchisepticus).